The sequence spans 176 residues: Peptide deformylase (176 aa).

2 residues coordinate Fe cation: cysteine 94 and histidine 136. Residue glutamate 137 is part of the active site. Fe cation is bound at residue histidine 140.

This sequence belongs to the polypeptide deformylase family. Fe(2+) is required as a cofactor.

The enzyme catalyses N-terminal N-formyl-L-methionyl-[peptide] + H2O = N-terminal L-methionyl-[peptide] + formate. In terms of biological role, removes the formyl group from the N-terminal Met of newly synthesized proteins. Requires at least a dipeptide for an efficient rate of reaction. N-terminal L-methionine is a prerequisite for activity but the enzyme has broad specificity at other positions. This Bartonella quintana (strain Toulouse) (Rochalimaea quintana) protein is Peptide deformylase.